Consider the following 218-residue polypeptide: Small ribosomal subunit protein uS3 (218 aa).

The region spanning 38-106 (IREFINQRLS…RVHINILEIK (69 aa)) is the KH type-2 domain.

Belongs to the universal ribosomal protein uS3 family. As to quaternary structure, part of the 30S ribosomal subunit. Forms a tight complex with proteins S10 and S14.

Functionally, binds the lower part of the 30S subunit head. Binds mRNA in the 70S ribosome, positioning it for translation. The chain is Small ribosomal subunit protein uS3 from Bacillus licheniformis (strain ATCC 14580 / DSM 13 / JCM 2505 / CCUG 7422 / NBRC 12200 / NCIMB 9375 / NCTC 10341 / NRRL NRS-1264 / Gibson 46).